The chain runs to 464 residues: Hydrogen cyanide synthase subunit HcnB (464 aa).

As to quaternary structure, heterotrimer of HcnA, HcnB and HcnC.

Its subcellular location is the cell membrane. The enzyme catalyses glycine + 2 A = hydrogen cyanide + 2 AH2 + CO2. With respect to regulation, oxygen is necessary for cyanogenesis. Activated by succinate, glycine methyl ester, glucose and D,L-methionine in addition to glycine. Phenazine methosulfate, methylene blue, 2,6-dichlorophenolindophenol (DCIP) and ferricyanide can replace oxygen for the reaction. Inhibited by pyrrolnitrin and acriflavine at 1 mM concentration. A three-component membrane-bound flavoenzyme that catalyzes the formation of hydrogen cyanide, a secondary metabolite, by transfer of electrons to a cyanide-resistant branch of the aerobic respiratory chain. This is Hydrogen cyanide synthase subunit HcnB from Pseudomonas aeruginosa (strain ATCC 15692 / DSM 22644 / CIP 104116 / JCM 14847 / LMG 12228 / 1C / PRS 101 / PAO1).